The following is a 921-amino-acid chain: Translation initiation factor IF-2 (921 aa).

The segment at 1–296 (MADQNTPGDK…PGPQKQRGRL (296 aa)) is disordered. A compositionally biased stretch (low complexity) spans 80-89 (RPSGPRPSGG). The segment covering 117 to 183 (ARVRDLEERR…AKKRFGEGEA (67 aa)) has biased composition (basic and acidic residues). Low complexity-rich tracts occupy residues 184 to 237 (PRPA…ARPA) and 248 to 257 (GRAPAAVAAG). The tr-type G domain maps to 417 to 586 (PRSPVVTVMG…MIALQADILD (170 aa)). The G1 stretch occupies residues 426 to 433 (GHVDHGKT). 426–433 (GHVDHGKT) is a binding site for GTP. The tract at residues 451 to 455 (GITQH) is G2. The G3 stretch occupies residues 474 to 477 (DTPG). Residues 474–478 (DTPGH) and 528–531 (NKID) each bind GTP. The segment at 528–531 (NKID) is G4. The tract at residues 564–566 (SAK) is G5.

It belongs to the TRAFAC class translation factor GTPase superfamily. Classic translation factor GTPase family. IF-2 subfamily.

The protein localises to the cytoplasm. Its function is as follows. One of the essential components for the initiation of protein synthesis. Protects formylmethionyl-tRNA from spontaneous hydrolysis and promotes its binding to the 30S ribosomal subunits. Also involved in the hydrolysis of GTP during the formation of the 70S ribosomal complex. The sequence is that of Translation initiation factor IF-2 from Bradyrhizobium sp. (strain ORS 278).